The chain runs to 394 residues: Phosphopentomutase (394 aa).

D15, D288, H293, D329, H330, and H341 together coordinate Mn(2+).

It belongs to the phosphopentomutase family. Mn(2+) serves as cofactor.

It is found in the cytoplasm. The enzyme catalyses 2-deoxy-alpha-D-ribose 1-phosphate = 2-deoxy-D-ribose 5-phosphate. It catalyses the reaction alpha-D-ribose 1-phosphate = D-ribose 5-phosphate. Its pathway is carbohydrate degradation; 2-deoxy-D-ribose 1-phosphate degradation; D-glyceraldehyde 3-phosphate and acetaldehyde from 2-deoxy-alpha-D-ribose 1-phosphate: step 1/2. In terms of biological role, isomerase that catalyzes the conversion of deoxy-ribose 1-phosphate (dRib-1-P) and ribose 1-phosphate (Rib-1-P) to deoxy-ribose 5-phosphate (dRib-5-P) and ribose 5-phosphate (Rib-5-P), respectively. This Bacillus licheniformis (strain ATCC 14580 / DSM 13 / JCM 2505 / CCUG 7422 / NBRC 12200 / NCIMB 9375 / NCTC 10341 / NRRL NRS-1264 / Gibson 46) protein is Phosphopentomutase.